We begin with the raw amino-acid sequence, 1024 residues long: Eukaryotic translation initiation factor 3 subunit A (1024 aa).

Positions 331–508 (VISSNAPGTG…QAITFQDDVF (178 aa)) constitute a PCI domain. 2 coiled-coil regions span residues 575-717 (AAED…REEA) and 777-889 (KRRG…RRSR). Basic and acidic residues-rich tracts occupy residues 797 to 866 (KERR…ERRA) and 873 to 886 (DKQRQREEEAEANR). Disordered stretches follow at residues 797-973 (KERR…GAYR) and 1001-1024 (AAAAESDGFTEVKKNVYRPPGRRA). 2 stretches are compositionally biased toward low complexity: residues 890–906 (AAGTGAAPAQELAAADA) and 946–971 (KEAAGGNATAAPSAPAAAPAPASSGA).

Belongs to the eIF-3 subunit A family. As to quaternary structure, component of the eukaryotic translation initiation factor 3 (eIF-3) complex.

The protein localises to the cytoplasm. Its function is as follows. RNA-binding component of the eukaryotic translation initiation factor 3 (eIF-3) complex, which is involved in protein synthesis of a specialized repertoire of mRNAs and, together with other initiation factors, stimulates binding of mRNA and methionyl-tRNAi to the 40S ribosome. The eIF-3 complex specifically targets and initiates translation of a subset of mRNAs involved in cell proliferation. The polypeptide is Eukaryotic translation initiation factor 3 subunit A (Mycosarcoma maydis (Corn smut fungus)).